The primary structure comprises 457 residues: Putative purine-cytosine permease YxlA (457 aa).

Transmembrane regions (helical) follow at residues 24-44 (FPVW…TIPV), 50-70 (LFWS…FMAS), 90-110 (FGVI…LGFF), 127-147 (IPGS…TIFG), 164-184 (AVFF…GSWI), 192-212 (IFLV…PYVA), 228-248 (FWYS…LGAL), 264-284 (IVQL…FGQM), 316-336 (IIMI…GQSN), 341-361 (FLNF…INLV), 392-412 (IAFV…FYIG), and 420-440 (GGDI…YVLM).

Belongs to the purine-cytosine permease (2.A.39) family.

Its subcellular location is the cell membrane. This Bacillus subtilis (strain 168) protein is Putative purine-cytosine permease YxlA (yxlA).